A 156-amino-acid chain; its full sequence is Small ribosomal subunit protein uS7 (156 aa).

The protein belongs to the universal ribosomal protein uS7 family. In terms of assembly, part of the 30S ribosomal subunit. Contacts proteins S9 and S11.

Its function is as follows. One of the primary rRNA binding proteins, it binds directly to 16S rRNA where it nucleates assembly of the head domain of the 30S subunit. Is located at the subunit interface close to the decoding center, probably blocks exit of the E-site tRNA. This Shigella dysenteriae serotype 1 (strain Sd197) protein is Small ribosomal subunit protein uS7.